A 398-amino-acid chain; its full sequence is 1-deoxy-D-xylulose 5-phosphate reductoisomerase (398 aa).

Thr-11, Gly-12, Ser-13, Ile-14, and Asn-125 together coordinate NADPH. A 1-deoxy-D-xylulose 5-phosphate-binding site is contributed by Lys-126. Residue Glu-127 participates in NADPH binding. A Mn(2+)-binding site is contributed by Asp-151. Ser-152, Glu-153, Ser-186, and His-209 together coordinate 1-deoxy-D-xylulose 5-phosphate. Residue Glu-153 participates in Mn(2+) binding. Gly-215 contributes to the NADPH binding site. Ser-222, Asn-227, Lys-228, and Glu-231 together coordinate 1-deoxy-D-xylulose 5-phosphate. Position 231 (Glu-231) interacts with Mn(2+).

This sequence belongs to the DXR family. Mg(2+) is required as a cofactor. The cofactor is Mn(2+).

It carries out the reaction 2-C-methyl-D-erythritol 4-phosphate + NADP(+) = 1-deoxy-D-xylulose 5-phosphate + NADPH + H(+). It functions in the pathway isoprenoid biosynthesis; isopentenyl diphosphate biosynthesis via DXP pathway; isopentenyl diphosphate from 1-deoxy-D-xylulose 5-phosphate: step 1/6. Its function is as follows. Catalyzes the NADPH-dependent rearrangement and reduction of 1-deoxy-D-xylulose-5-phosphate (DXP) to 2-C-methyl-D-erythritol 4-phosphate (MEP). The sequence is that of 1-deoxy-D-xylulose 5-phosphate reductoisomerase from Acinetobacter baylyi (strain ATCC 33305 / BD413 / ADP1).